A 419-amino-acid polypeptide reads, in one-letter code: Large ribosomal subunit protein uL4 (419 aa).

Residue Ala-2 is modified to N-acetylalanine. Lys-14 carries the post-translational modification N6-acetyllysine. Residue Arg-97 is modified to Omega-N-methylarginine. The residue at position 106 (Lys-106) is an N6-acetyllysine. Lys-239 is covalently cross-linked (Glycyl lysine isopeptide (Lys-Gly) (interchain with G-Cter in SUMO2)). Lys-259 is subject to N6-acetyllysine. Thr-266 carries the post-translational modification Phosphothreonine. Phosphoserine occurs at positions 290 and 295. Arg-300 carries the citrulline modification. A Glycyl lysine isopeptide (Lys-Gly) (interchain with G-Cter in SUMO2) cross-link involves residue Lys-327. Residues Lys-333 and Lys-353 each carry the N6-acetyllysine modification. An N6-acetyllysine; alternate modification is found at Lys-364. Residue Lys-364 forms a Glycyl lysine isopeptide (Lys-Gly) (interchain with G-Cter in SUMO1); alternate linkage. The segment covering 364-379 (KSEKVVPEKGTADKKP) has biased composition (basic and acidic residues). A disordered region spans residues 364–419 (KSEKVVPEKGTADKKPAVGKKGKKVDAKKQKPAGKKVVAKKPAEKKPTTEEKKPAA). Ser-365 carries the phosphoserine modification. The segment covering 393 to 402 (QKPAGKKVVA) has biased composition (basic residues). A compositionally biased stretch (basic and acidic residues) spans 404-419 (KPAEKKPTTEEKKPAA).

It belongs to the universal ribosomal protein uL4 family. As to quaternary structure, component of the large ribosomal subunit. May bind IPO9 with low affinity. Interacts with RBM3. Post-translationally, citrullinated by PADI4.

Its subcellular location is the cytoplasm. Its function is as follows. Component of the large ribosomal subunit. The ribosome is a large ribonucleoprotein complex responsible for the synthesis of proteins in the cell. This chain is Large ribosomal subunit protein uL4 (Rpl4), found in Mus musculus (Mouse).